A 137-amino-acid chain; its full sequence is Large ribosomal subunit protein uL16c (137 aa).

Belongs to the universal ribosomal protein uL16 family. In terms of assembly, part of the 50S ribosomal subunit.

The protein resides in the plastid. It is found in the chloroplast. This is Large ribosomal subunit protein uL16c from Adiantum capillus-veneris (Maidenhair fern).